The chain runs to 253 residues: 3-deoxy-manno-octulosonate cytidylyltransferase (253 aa).

It belongs to the KdsB family.

It is found in the cytoplasm. The enzyme catalyses 3-deoxy-alpha-D-manno-oct-2-ulosonate + CTP = CMP-3-deoxy-beta-D-manno-octulosonate + diphosphate. The protein operates within nucleotide-sugar biosynthesis; CMP-3-deoxy-D-manno-octulosonate biosynthesis; CMP-3-deoxy-D-manno-octulosonate from 3-deoxy-D-manno-octulosonate and CTP: step 1/1. It functions in the pathway bacterial outer membrane biogenesis; lipopolysaccharide biosynthesis. Activates KDO (a required 8-carbon sugar) for incorporation into bacterial lipopolysaccharide in Gram-negative bacteria. This Neisseria meningitidis serogroup C (strain 053442) protein is 3-deoxy-manno-octulosonate cytidylyltransferase.